Here is a 141-residue protein sequence, read N- to C-terminus: VLSPADKTNVKTTWDKIGGHAGEYGGEALERTFMAFPTTKTYFPHFDLSPGSAQVKTHGKKVADALTTAVSHIDDLPGALSALSDLHAYKLRVDPVNFKLLSHCLLVTLACHHPADFTPAVHASLDKFFSAVSTVLTSKYR.

Residues 1–141 (VLSPADKTNV…VSTVLTSKYR (141 aa)) form the Globin domain. At Ser3 the chain carries Phosphoserine. N6-succinyllysine is present on Lys7. Position 8 is a phosphothreonine (Thr8). Lys11 is subject to N6-succinyllysine. Lys16 bears the N6-acetyllysine; alternate mark. At Lys16 the chain carries N6-succinyllysine; alternate. Tyr24 is modified (phosphotyrosine). Lys40 carries the N6-succinyllysine modification. Ser49 is modified (phosphoserine). Residue His58 coordinates O2. His87 contacts heme b. A Phosphoserine modification is found at Ser102. Thr108 carries the phosphothreonine modification. A Phosphoserine modification is found at Ser124. A phosphothreonine mark is found at Thr134 and Thr137. At Ser138 the chain carries Phosphoserine.

The protein belongs to the globin family. As to quaternary structure, heterotetramer of two alpha chains and two beta chains. As to expression, red blood cells.

Involved in oxygen transport from the lung to the various peripheral tissues. This Leptonychotes weddellii (Weddell seal) protein is Hemoglobin subunit alpha-1/2.